A 202-amino-acid polypeptide reads, in one-letter code: Small ribosomal subunit protein uS4 (202 aa).

Positions 21–42 (LSRKSPRRAYPPGQHGQARRKR) are disordered. The S4 RNA-binding domain occupies 90 to 152 (MRLDNTVFRL…DRSRKLVETN (63 aa)).

The protein belongs to the universal ribosomal protein uS4 family. In terms of assembly, part of the 30S ribosomal subunit. Contacts protein S5. The interaction surface between S4 and S5 is involved in control of translational fidelity.

Functionally, one of the primary rRNA binding proteins, it binds directly to 16S rRNA where it nucleates assembly of the body of the 30S subunit. Its function is as follows. With S5 and S12 plays an important role in translational accuracy. The chain is Small ribosomal subunit protein uS4 from Synechocystis sp. (strain ATCC 27184 / PCC 6803 / Kazusa).